Consider the following 130-residue polypeptide: Organ-specific protein P4 (130 aa).

A run of 2 repeats spans residues H60–I85 and H86–I111. A 2 X 26 AA tandem repeats region spans residues H60–I111. The disordered stretch occupies residues A79 to A130.

It to organ specific protein S2. As to expression, expressed in pods.

In Pisum sativum (Garden pea), this protein is Organ-specific protein P4.